The chain runs to 159 residues: RNA pyrophosphohydrolase (159 aa).

The Nudix hydrolase domain maps to 6–149; the sequence is GFRPNVGIIL…KREVYRRALK (144 aa). A Nudix box motif is present at residues 38-59; the sequence is GGINPDETPEDALYRELNEEVG.

Belongs to the Nudix hydrolase family. RppH subfamily. The cofactor is a divalent metal cation.

Its function is as follows. Accelerates the degradation of transcripts by removing pyrophosphate from the 5'-end of triphosphorylated RNA, leading to a more labile monophosphorylated state that can stimulate subsequent ribonuclease cleavage. The protein is RNA pyrophosphohydrolase of Pseudomonas putida (strain ATCC 700007 / DSM 6899 / JCM 31910 / BCRC 17059 / LMG 24140 / F1).